Reading from the N-terminus, the 394-residue chain is Chalcone synthase 8 (394 aa).

The active site involves Cys165.

Belongs to the thiolase-like superfamily. Chalcone/stilbene synthases family.

The catalysed reaction is (E)-4-coumaroyl-CoA + 3 malonyl-CoA + 3 H(+) = 2',4,4',6'-tetrahydroxychalcone + 3 CO2 + 4 CoA. Its pathway is secondary metabolite biosynthesis; flavonoid biosynthesis. Its function is as follows. The primary product of this enzyme is 4,2',4',6'-tetrahydroxychalcone (also termed naringenin-chalcone or chalcone) which can under specific conditions spontaneously isomerize into naringenin. This Bromheadia finlaysoniana (Orchid) protein is Chalcone synthase 8 (CHS8).